Reading from the N-terminus, the 213-residue chain is Protein GrpE (213 aa).

A compositionally biased stretch (basic and acidic residues) spans 1–23; the sequence is MSDEKKPEAETSESLQKREEKLA. The segment at 1–43 is disordered; it reads MSDEKKPEAETSESLQKREEKLAETLASEPAAQGEAEDAAAAG. Positions 29 to 43 are enriched in low complexity; the sequence is EPAAQGEAEDAAAAG.

Belongs to the GrpE family. Homodimer.

The protein resides in the cytoplasm. Functionally, participates actively in the response to hyperosmotic and heat shock by preventing the aggregation of stress-denatured proteins, in association with DnaK and GrpE. It is the nucleotide exchange factor for DnaK and may function as a thermosensor. Unfolded proteins bind initially to DnaJ; upon interaction with the DnaJ-bound protein, DnaK hydrolyzes its bound ATP, resulting in the formation of a stable complex. GrpE releases ADP from DnaK; ATP binding to DnaK triggers the release of the substrate protein, thus completing the reaction cycle. Several rounds of ATP-dependent interactions between DnaJ, DnaK and GrpE are required for fully efficient folding. The polypeptide is Protein GrpE (Parvibaculum lavamentivorans (strain DS-1 / DSM 13023 / NCIMB 13966)).